We begin with the raw amino-acid sequence, 113 residues long: Iron-sulfur cluster insertion protein ErpA (113 aa).

3 residues coordinate iron-sulfur cluster: Cys-41, Cys-105, and Cys-107.

The protein belongs to the HesB/IscA family. In terms of assembly, homodimer. Requires iron-sulfur cluster as cofactor.

Required for insertion of 4Fe-4S clusters for at least IspG. This is Iron-sulfur cluster insertion protein ErpA from Glaesserella parasuis serovar 5 (strain SH0165) (Haemophilus parasuis).